A 341-amino-acid polypeptide reads, in one-letter code: Methionine import ATP-binding protein MetN (341 aa).

Residues Ile2–Val241 enclose the ABC transporter domain. ATP is bound at residue Gly38 to Ser45.

This sequence belongs to the ABC transporter superfamily. Methionine importer (TC 3.A.1.24) family. As to quaternary structure, the complex is composed of two ATP-binding proteins (MetN), two transmembrane proteins (MetP) and a solute-binding protein (MetQ).

The protein localises to the cell membrane. It catalyses the reaction L-methionine(out) + ATP + H2O = L-methionine(in) + ADP + phosphate + H(+). The catalysed reaction is D-methionine(out) + ATP + H2O = D-methionine(in) + ADP + phosphate + H(+). Part of the ABC transporter complex MetNPQ involved in methionine import. Responsible for energy coupling to the transport system. It has also been shown to be involved in methionine sulfoxide transport. The polypeptide is Methionine import ATP-binding protein MetN (Bacillus subtilis (strain 168)).